The chain runs to 393 residues: Rubredoxin-NAD(+) reductase (393 aa).

Residues 9–12 (SGMA), 33–34 (CA), K42, V80, E162, D282, V294, and K325 each bind FAD.

It belongs to the FAD-dependent oxidoreductase family. In terms of assembly, homodimer. FAD is required as a cofactor.

The protein localises to the cytoplasm. The enzyme catalyses 2 reduced [rubredoxin] + NAD(+) + H(+) = 2 oxidized [rubredoxin] + NADH. It functions in the pathway hydrocarbon metabolism; alkane degradation. In terms of biological role, involved in the hydrocarbon hydroxylating system, which transfers electrons from NADH to rubredoxin reductase and then through rubredoxin to alkane 1 monooxygenase. The chain is Rubredoxin-NAD(+) reductase (rubB) from Acinetobacter baylyi (strain ATCC 33305 / BD413 / ADP1).